The following is a 491-amino-acid chain: Ketol-acid reductoisomerase (NADP(+)) (491 aa).

One can recognise a KARI N-terminal Rossmann domain in the interval 15–208 (AQLGKCRFMG…GGHRAGVLES (194 aa)). NADP(+) is bound by residues 45–48 (CGAQ), Arg68, Arg76, Ser78, and 108–110 (DKQ). Residue His132 is part of the active site. Gly158 lines the NADP(+) pocket. 2 KARI C-terminal knotted domains span residues 209-344 (SFVA…TAPQ) and 345-484 (FEGK…MTDM). 4 residues coordinate Mg(2+): Asp217, Glu221, Glu389, and Glu393. Ser414 is a binding site for substrate.

This sequence belongs to the ketol-acid reductoisomerase family. It depends on Mg(2+) as a cofactor.

The catalysed reaction is (2R)-2,3-dihydroxy-3-methylbutanoate + NADP(+) = (2S)-2-acetolactate + NADPH + H(+). It carries out the reaction (2R,3R)-2,3-dihydroxy-3-methylpentanoate + NADP(+) = (S)-2-ethyl-2-hydroxy-3-oxobutanoate + NADPH + H(+). It participates in amino-acid biosynthesis; L-isoleucine biosynthesis; L-isoleucine from 2-oxobutanoate: step 2/4. The protein operates within amino-acid biosynthesis; L-valine biosynthesis; L-valine from pyruvate: step 2/4. Involved in the biosynthesis of branched-chain amino acids (BCAA). Catalyzes an alkyl-migration followed by a ketol-acid reduction of (S)-2-acetolactate (S2AL) to yield (R)-2,3-dihydroxy-isovalerate. In the isomerase reaction, S2AL is rearranged via a Mg-dependent methyl migration to produce 3-hydroxy-3-methyl-2-ketobutyrate (HMKB). In the reductase reaction, this 2-ketoacid undergoes a metal-dependent reduction by NADPH to yield (R)-2,3-dihydroxy-isovalerate. This Salmonella agona (strain SL483) protein is Ketol-acid reductoisomerase (NADP(+)).